The sequence spans 235 residues: LexA repressor (235 aa).

The H-T-H motif DNA-binding region spans 26–46 (FDEMKEALDLASKSGIHRLIT). The disordered stretch occupies residues 72–104 (QATTAAPPKGRGAFRPQVLEGGGQAPTTSAQPQ). Residues Ser156 and Lys193 each act as for autocatalytic cleavage activity in the active site.

This sequence belongs to the peptidase S24 family. In terms of assembly, homodimer.

The enzyme catalyses Hydrolysis of Ala-|-Gly bond in repressor LexA.. Functionally, represses a number of genes involved in the response to DNA damage (SOS response), including recA and lexA. In the presence of single-stranded DNA, RecA interacts with LexA causing an autocatalytic cleavage which disrupts the DNA-binding part of LexA, leading to derepression of the SOS regulon and eventually DNA repair. This Caulobacter sp. (strain K31) protein is LexA repressor.